The sequence spans 422 residues: Serine--tRNA ligase (422 aa).

The segment at 1-20 is disordered; sequence MHDLKSIRDNPDGFDAGLKR. Position 229 to 231 (229 to 231) interacts with L-serine; that stretch reads TAE. 260-262 contributes to the ATP binding site; that stretch reads RSE. E283 is a binding site for L-serine. Position 347-350 (347-350) interacts with ATP; that stretch reads EISS. Residue S383 coordinates L-serine.

This sequence belongs to the class-II aminoacyl-tRNA synthetase family. Type-1 seryl-tRNA synthetase subfamily. In terms of assembly, homodimer. The tRNA molecule binds across the dimer.

Its subcellular location is the cytoplasm. The catalysed reaction is tRNA(Ser) + L-serine + ATP = L-seryl-tRNA(Ser) + AMP + diphosphate + H(+). It catalyses the reaction tRNA(Sec) + L-serine + ATP = L-seryl-tRNA(Sec) + AMP + diphosphate + H(+). It participates in aminoacyl-tRNA biosynthesis; selenocysteinyl-tRNA(Sec) biosynthesis; L-seryl-tRNA(Sec) from L-serine and tRNA(Sec): step 1/1. Its function is as follows. Catalyzes the attachment of serine to tRNA(Ser). Is also able to aminoacylate tRNA(Sec) with serine, to form the misacylated tRNA L-seryl-tRNA(Sec), which will be further converted into selenocysteinyl-tRNA(Sec). The chain is Serine--tRNA ligase from Paramagnetospirillum magneticum (strain ATCC 700264 / AMB-1) (Magnetospirillum magneticum).